Here is a 429-residue protein sequence, read N- to C-terminus: D-amino acid dehydrogenase (429 aa).

3-17 contributes to the FAD binding site; the sequence is VLILGSGVIGTTTAW.

The protein belongs to the DadA oxidoreductase family. The cofactor is FAD.

It catalyses the reaction a D-alpha-amino acid + A + H2O = a 2-oxocarboxylate + AH2 + NH4(+). The protein operates within amino-acid degradation; D-alanine degradation; NH(3) and pyruvate from D-alanine: step 1/1. In terms of biological role, oxidative deamination of D-amino acids. The protein is D-amino acid dehydrogenase of Xanthomonas campestris pv. campestris (strain 8004).